The primary structure comprises 272 residues: MDSPSPNSDPLTIGGRQFNSRLFTGTGKYPSMTSMQQSIERSGCDMVTVAVRRVQTVAAGHEGLMEAIDWQRIWMLPNTAGCTNAEEAVRVARLGRELAKLAGQEDNTFVKLEVIPDARHLLPDPIGTLNAAEQLVKEGFTVLPYINADPLLAKRLEEVGCATVMPLGSPIGSGQGLNNAANIGLIIENAGVPVVVDAGIGVPSEAAQALEMGADAVLVNSAIALAGDPAAMASAMSQAVMAGRTAHLSGRLPRRDQASASSPTTGLVQSPQ.

The active-site Schiff-base intermediate with DXP is the Lys111. 1-deoxy-D-xylulose 5-phosphate-binding positions include Gly172, 198–199, and 220–221; these read AG and NS. Residues 249–272 form a disordered region; that stretch reads SGRLPRRDQASASSPTTGLVQSPQ. Residues 258–272 show a composition bias toward polar residues; the sequence is ASASSPTTGLVQSPQ.

The protein belongs to the ThiG family. As to quaternary structure, homotetramer. Forms heterodimers with either ThiH or ThiS.

It localises to the cytoplasm. It carries out the reaction [ThiS sulfur-carrier protein]-C-terminal-Gly-aminoethanethioate + 2-iminoacetate + 1-deoxy-D-xylulose 5-phosphate = [ThiS sulfur-carrier protein]-C-terminal Gly-Gly + 2-[(2R,5Z)-2-carboxy-4-methylthiazol-5(2H)-ylidene]ethyl phosphate + 2 H2O + H(+). It participates in cofactor biosynthesis; thiamine diphosphate biosynthesis. In terms of biological role, catalyzes the rearrangement of 1-deoxy-D-xylulose 5-phosphate (DXP) to produce the thiazole phosphate moiety of thiamine. Sulfur is provided by the thiocarboxylate moiety of the carrier protein ThiS. In vitro, sulfur can be provided by H(2)S. This Synechococcus sp. (strain CC9605) protein is Thiazole synthase.